The chain runs to 175 residues: Large ribosomal subunit protein uL10 (175 aa).

It belongs to the universal ribosomal protein uL10 family. As to quaternary structure, part of the ribosomal stalk of the 50S ribosomal subunit. The N-terminus interacts with L11 and the large rRNA to form the base of the stalk. The C-terminus forms an elongated spine to which L12 dimers bind in a sequential fashion forming a multimeric L10(L12)X complex.

Its function is as follows. Forms part of the ribosomal stalk, playing a central role in the interaction of the ribosome with GTP-bound translation factors. This chain is Large ribosomal subunit protein uL10, found in Cupriavidus taiwanensis (strain DSM 17343 / BCRC 17206 / CCUG 44338 / CIP 107171 / LMG 19424 / R1) (Ralstonia taiwanensis (strain LMG 19424)).